The chain runs to 391 residues: Matrix metalloproteinase-23 (391 aa).

The Cytoplasmic segment spans residues 1–19 (MGWRACLRPEASGAVQGRW). Residues 1–79 (MGWRACLRPE…LSMLVTRRRR (79 aa)) constitute a propeptide that is removed on maturation. A helical; Signal-anchor for type II membrane protein membrane pass occupies residues 20–38 (LGAVLSGLCLLSALAFLEW). The Lumenal portion of the chain corresponds to 39-391 (LGSPTETAWN…TYSWRVRVRS (353 aa)). N-linked (GlcNAc...) asparagine glycosylation is found at Asn-93 and Asn-149. Zn(2+) is bound at residue His-212. Residue Glu-213 is part of the active site. Positions 216 and 222 each coordinate Zn(2+). N-linked (GlcNAc...) asparagine glycosylation occurs at Asn-233. Residues 256 to 290 (CLDRIFVCTSWARKGFCDVRQRLMKRLCPRSCDFC) enclose the ShKT domain. Intrachain disulfides connect Cys-256–Cys-290, Cys-263–Cys-283, and Cys-272–Cys-287. The region spanning 296–381 (PTVATTTSPT…VVRHRQRVLT (86 aa)) is the Ig-like C2-type domain. Asn-317 carries N-linked (GlcNAc...) asparagine glycosylation. A disulfide bridge links Cys-322 with Cys-371.

The protein belongs to the peptidase M10A family. It depends on Zn(2+) as a cofactor. Post-translationally, N-glycosylated. Proteolytic cleavage might yield an active form. In terms of tissue distribution, expressed at the highest levels in ovary and uterus. In ovary expression is strictly confined to granulosa cells of preantral and small antral follicles. Detected also in testis and prostate.

It localises to the membrane. It is found in the endoplasmic reticulum membrane. With respect to regulation, inhibited by TIMP2. Functionally, protease. May regulate the surface expression of some potassium channels by retaining them in the endoplasmic reticulum. This chain is Matrix metalloproteinase-23 (Mmp23), found in Rattus norvegicus (Rat).